The following is a 211-amino-acid chain: SAGA-associated factor 11 homolog (211 aa).

The SGF11-type zinc-finger motif lies at 115-136 (CTCPHCDRLVAAARFAPHLEKC). Residues 153–211 (TKEGASASSSSTSTYIQSGGNTGGTDDEDDVDWSSDKRKKKSTQNSRNNGSKKNNGKIF) are disordered. Over residues 157 to 166 (ASASSSSTST) the composition is skewed to low complexity. A Phosphoserine modification is found at serine 187. Low complexity predominate over residues 197–211 (NSRNNGSKKNNGKIF).

The protein belongs to the SGF11 family. As to quaternary structure, component of some SAGA transcription coactivator-HAT complexes, at least composed of Ada2b, not/nonstop, Pcaf/Gcn5, Sgf11 and Spt3. Within the SAGA complex, Sgf11, e(y)2, and not/nonstop form an additional subcomplex of SAGA called the DUB module (deubiquitination module). Interacts directly with not/nonstop. Interacts with the AMEX complex component xmas-2. Interacts with Cbp80; important for promoter recruitment of Sgf11 that is not associated with the DUB module.

Its subcellular location is the nucleus. It is found in the nucleoplasm. It localises to the cytoplasm. Component of the transcription regulatory histone acetylation (HAT) complex SAGA, a multiprotein complex that activates transcription by remodeling chromatin and mediating histone acetylation and deubiquitination. Within the SAGA complex, participates in a subcomplex that specifically deubiquitinates histone H2B. The SAGA complex is recruited to specific gene promoters by activators, where it is required for transcription. Required for nuclear receptor-mediated transactivation. Binds independently on SAGA to promoters in an RNA-dependent manner. Binds to mRNA and is essential for total mRNA export from the nucleus. Required to counteract heterochromatin silencing. Controls the development of neuronal connectivity in visual system by being required for accurate axon targeting in the optic lobe. Required for expression of ecdysone-induced genes such as br/broad. In Drosophila mojavensis (Fruit fly), this protein is SAGA-associated factor 11 homolog.